A 31-amino-acid chain; its full sequence is Cytochrome b6-f complex subunit 6 (31 aa).

A helical membrane pass occupies residues 3-23 (LIIGYIILLACAFGLAAGLYF).

It belongs to the PetL family. The 4 large subunits of the cytochrome b6-f complex are cytochrome b6, subunit IV (17 kDa polypeptide, PetD), cytochrome f and the Rieske protein, while the 4 small subunits are PetG, PetL, PetM and PetN. The complex functions as a dimer.

The protein localises to the plastid. The protein resides in the chloroplast thylakoid membrane. In terms of biological role, component of the cytochrome b6-f complex, which mediates electron transfer between photosystem II (PSII) and photosystem I (PSI), cyclic electron flow around PSI, and state transitions. PetL is important for photoautotrophic growth as well as for electron transfer efficiency and stability of the cytochrome b6-f complex. In Guillardia theta (Cryptophyte), this protein is Cytochrome b6-f complex subunit 6.